The primary structure comprises 259 residues: DnaJ homolog subfamily C member 9 (259 aa).

A J domain is found at 15 to 82 (DLYQVLGVRR…EQKAVYDEQG (68 aa)). At S109 the chain carries Phosphoserine. Residues 171–248 (EIPAYSAFVK…EAKYCKPSKG (78 aa)) are required for histone binding.

In terms of assembly, forms a co-chaperone complex with MCM2 and histone H3.3-H4 dimers. Within the complex, interacts (via C-terminus) with MCM2 (via N-terminus); the interaction is histone-dependent. Within the complex, interacts (via C-terminus) with histone H3.3-H4 heterodimers; the interaction is direct. Interacts with histones H4, H3.3, H3.2 and H3.1, but not with CENPA or the testis-specific histone H3.1t. Interacts (via J domain) with HSPA1A, HSPA1B and HSPA8. May interact with TONSL; the interaction seems to be histone-dependent. May interact with HSPA8 and BAG2; the interactions seem to be histone-dependent.

The protein localises to the nucleus. It localises to the cytoplasm. It is found in the cell membrane. Functionally, acts as a dual histone chaperone and heat shock co-chaperone. As a histone chaperone, forms a co-chaperone complex with MCM2 and histone H3-H4 heterodimers; and may thereby assist MCM2 in histone H3-H4 heterodimer recognition and facilitate the assembly of histones into nucleosomes. May also act as a histone co-chaperone together with TONSL. May recruit histone chaperones ASF1A, NASP and SPT2 to histone H3-H4 heterodimers. Also plays a role as co-chaperone of the HSP70 family of molecular chaperone proteins, such as HSPA1A, HSPA1B and HSPA8. As a co-chaperone, may play a role in the recruitment of HSP70-type molecular chaperone machinery to histone H3-H4 substrates, thereby maintaining the histone structural integrity. Exhibits activity to assemble histones onto DNA in vitro. This Mus musculus (Mouse) protein is DnaJ homolog subfamily C member 9 (Dnajc9).